Here is a 501-residue protein sequence, read N- to C-terminus: Cytochrome P450 90A4 (501 aa).

A helical transmembrane segment spans residues 2–22 (AAAALLLLAAAAAAVVVAMAL). Cys446 lines the heme pocket.

The protein belongs to the cytochrome P450 family. Requires heme as cofactor. As to expression, highly expressed in shoot apex and inflorenscence. Expressed in roots, stems, leaf blades and leaf sheaths.

The protein resides in the cell membrane. It participates in plant hormone biosynthesis; brassinosteroid biosynthesis. In terms of biological role, catalyzes the C23-alpha-hydroxylation step in brassinosteroid biosynthesis. Converts 6-deoxocathasterone to 6-deoxoteasterone in the late C6-oxidation pathway and cathasterone to teasterone (TE) in the early C6-oxidation pathway of brassinolide (BL) biosynthesis. In Oryza sativa subsp. japonica (Rice), this protein is Cytochrome P450 90A4.